The sequence spans 276 residues: Rhomboid protease GlpG homolog (276 aa).

Transmembrane regions (helical) follow at residues 94 to 114 (GPLTLGMMALCVVAYLAMSII), 142 to 162 (LLLHFSLLSLIFNLLWWWYLA), 168 to 188 (SVGSGKLLTLTLVTALVGGVI), 192 to 212 (IAGPWFGGLGGVVYALVGYVW), 225 to 245 (LPRGILVFMLLWLAIGGLGLF), and 252 to 272 (ADLVAGMLIGLAMAMTDTLHA).

This sequence belongs to the peptidase S54 family.

It localises to the cell inner membrane. The protein is Rhomboid protease GlpG homolog (glpG) of Cronobacter sakazakii (strain ATCC BAA-894) (Enterobacter sakazakii).